The following is a 120-amino-acid chain: Large ribosomal subunit protein uL18 (120 aa).

This sequence belongs to the universal ribosomal protein uL18 family. As to quaternary structure, part of the 50S ribosomal subunit; part of the 5S rRNA/L5/L18/L25 subcomplex. Contacts the 5S and 23S rRNAs.

Its function is as follows. This is one of the proteins that bind and probably mediate the attachment of the 5S RNA into the large ribosomal subunit, where it forms part of the central protuberance. This Gluconobacter oxydans (strain 621H) (Gluconobacter suboxydans) protein is Large ribosomal subunit protein uL18.